The primary structure comprises 220 residues: MSDTLNLLAKKRDRAGKGASRAIRREGLVPAVIYGDKTPAMGITVDHIALFKMLNTGHFMNSVVTIDVDGQKLPTIPKDVQFHPVTDRVLHVDFLRVSANSLVEVAIPVSYVDEEKSPGIKLGGVLNIIHHELKLKVKATAIPEEIVVSVAGLEVGDSIHLNQIKLPEGAELAHDEHESTAATVIAPSGMKSNADDEADAALAAAASAASAEKKEAEKSE.

This sequence belongs to the bacterial ribosomal protein bL25 family. CTC subfamily. As to quaternary structure, part of the 50S ribosomal subunit; part of the 5S rRNA/L5/L18/L25 subcomplex. Contacts the 5S rRNA. Binds to the 5S rRNA independently of L5 and L18.

Its function is as follows. This is one of the proteins that binds to the 5S RNA in the ribosome where it forms part of the central protuberance. The sequence is that of Large ribosomal subunit protein bL25 from Zymomonas mobilis subsp. mobilis (strain ATCC 31821 / ZM4 / CP4).